The chain runs to 509 residues: Phytase A (509 aa).

Positions 1-15 are cleaved as a signal peptide; it reads MFLLMVPLFSYLAAA. Residues cysteine 27 and cysteine 36 are joined by a disulfide bond. Positions 46, 47, 75, 76, 79, 82, and 164 each coordinate 1D-myo-inositol hexakisphosphate. Cystine bridges form between cysteine 65/cysteine 444, cysteine 216/cysteine 507, cysteine 266/cysteine 295, and cysteine 478/cysteine 486. The Nucleophile role is filled by histidine 76. N-linked (GlcNAc...) asparagine glycans are attached at residues asparagine 171 and asparagine 208. Lysine 314 is a 1D-myo-inositol hexakisphosphate binding site. 3 N-linked (GlcNAc...) asparagine glycosylation sites follow: asparagine 348, asparagine 352, and asparagine 367. 1D-myo-inositol hexakisphosphate is bound by residues histidine 376 and aspartate 377. N-linked (GlcNAc...) asparagine glycosylation occurs at asparagine 401.

Belongs to the histidine acid phosphatase family. As to quaternary structure, monomer.

Its subcellular location is the secreted. The catalysed reaction is 1D-myo-inositol hexakisphosphate + H2O = 1D-myo-inositol 1,2,4,5,6-pentakisphosphate + phosphate. It carries out the reaction 1D-myo-inositol 1,2,4,5,6-pentakisphosphate + H2O = 1D-myo-inositol 1,2,5,6-tetrakisphosphate + phosphate. The enzyme catalyses 1D-myo-inositol 1,2,5,6-tetrakisphosphate + H2O = 1D-myo-inositol 1,2,6-trisphosphate + phosphate. It catalyses the reaction 1D-myo-inositol 1,2,6-trisphosphate + H2O = 1D-myo-inositol 1,2-bisphosphate + phosphate. The catalysed reaction is 1D-myo-inositol 1,2-bisphosphate + H2O = 1D-myo-inositol 2-phosphate + phosphate. Its function is as follows. Catalyzes the phosphate monoester hydrolysis of phytic acid (myo-inositol hexakisphosphate), which results in the stepwise formation of myo-inositol pentakis-, tetrakis-, tris-, bis-, and monophosphates, as well as the liberation of inorganic phosphate. Myo-inositol 2-monophosphate is the end product. Is also able to dephosphorylate the classic acid phosphatase substrate p-nitrophenyl phosphate. In Neurospora crassa (strain ATCC 24698 / 74-OR23-1A / CBS 708.71 / DSM 1257 / FGSC 987), this protein is Phytase A (pht-1).